We begin with the raw amino-acid sequence, 362 residues long: Atypical chemokine receptor 3 (362 aa).

Residues 1–40 are Extracellular-facing; the sequence is MDLHLFDYSEPGNFSDISWPCNSSDCIVVDTVMCPNMPNK. Asparagine 13, asparagine 22, and asparagine 39 each carry an N-linked (GlcNAc...) asparagine glycan. A helical membrane pass occupies residues 41–61; the sequence is SVLLYTLSFIYIFIFVIGMIA. Residues 62–81 are Cytoplasmic-facing; the sequence is NSVVVWVNIQAKTTGYDTHC. Residues 82 to 102 form a helical membrane-spanning segment; sequence YILNLAIADLWVVLTIPVWVV. Over 103-118 the chain is Extracellular; sequence SLVQHNQWPMGELTCK. Cysteine 117 and cysteine 196 are disulfide-bonded. A helical transmembrane segment spans residues 119–139; sequence VTHLIFSINLFGSIFFLTCMS. The Cytoplasmic segment spans residues 140 to 162; that stretch reads VDRYLSITYFTNTPSSRKKMVRR. The helical transmembrane segment at 163-183 threads the bilayer; the sequence is VVCILVWLLAFCVSLPDTYYL. At 184-213 the chain is on the extracellular side; that stretch reads KTVTSASNNETYCRSFYPEHSIKEWLIGME. Residues 214–234 form a helical membrane-spanning segment; the sequence is LVSVVLGFAVPFSIIAVFYFL. Residues 235-252 are Cytoplasmic-facing; that stretch reads LARAISASSDQEKHSSRK. Residues 253–273 traverse the membrane as a helical segment; sequence IIFSYVVVFLVCWLPYHVAVL. The Extracellular segment spans residues 274–296; sequence LDIFSILHYIPFTCRLEHALFTA. A helical membrane pass occupies residues 297–319; the sequence is LHVTQCLSLVHCCVNPVLYSFIN. The Cytoplasmic portion of the chain corresponds to 320–362; it reads RNYRYELMKAFIFKYSAKTGLTKLIDASRVSETEYSALEQSTK. The segment at 324–362 is C-terminal cytoplasmic tail; the sequence is YELMKAFIFKYSAKTGLTKLIDASRVSETEYSALEQSTK. Serine 347, serine 350, and serine 355 each carry phosphoserine.

Belongs to the G-protein coupled receptor 1 family. Atypical chemokine receptor subfamily. In terms of assembly, homodimer. Can form heterodimers with CXCR4; heterodimerization may regulate CXCR4 signaling activity. Interacts with ARRB1 and ARRB2. The Ser/Thr residues in the C-terminal cytoplasmic tail may be phosphorylated. In terms of processing, ubiquitinated at the Lys residues in its C-terminal cytoplasmic tail and is essential for correct trafficking from and to the cell membrane. Deubiquitinated by CXCL12-stimulation in a reversible manner. Expressed in monocytes, basophils, B-cells, umbilical vein endothelial cells (HUVEC) and B-lymphoblastoid cells. Lower expression detected in CD4+ T-lymphocytes and natural killer cells. In the brain, detected in endothelial cells and capillaries, and in mature neurons of the frontal cortex and hippocampus. Expressed in tubular formation in the kidney. Highly expressed in astroglial tumor endothelial, microglial and glioma cells. Expressed at low levels in normal CD34+ progenitor cells, but at very high levels in several myeloid malignant cell lines. Expressed in breast carcinomas but not in normal breast tissue (at protein level).

It localises to the cell membrane. The protein resides in the early endosome. The protein localises to the recycling endosome. In terms of biological role, atypical chemokine receptor that controls chemokine levels and localization via high-affinity chemokine binding that is uncoupled from classic ligand-driven signal transduction cascades, resulting instead in chemokine sequestration, degradation, or transcytosis. Also known as interceptor (internalizing receptor) or chemokine-scavenging receptor or chemokine decoy receptor. Acts as a receptor for chemokines CXCL11 and CXCL12/SDF1. Chemokine binding does not activate G-protein-mediated signal transduction but instead induces beta-arrestin recruitment, leading to ligand internalization and activation of MAPK signaling pathway. Required for regulation of CXCR4 protein levels in migrating interneurons, thereby adapting their chemokine responsiveness. In glioma cells, transduces signals via MEK/ERK pathway, mediating resistance to apoptosis. Promotes cell growth and survival. Not involved in cell migration, adhesion or proliferation of normal hematopoietic progenitors but activated by CXCL11 in malignant hemapoietic cells, leading to phosphorylation of ERK1/2 (MAPK3/MAPK1) and enhanced cell adhesion and migration. Plays a regulatory role in CXCR4-mediated activation of cell surface integrins by CXCL12. Required for heart valve development. Regulates axon guidance in the oculomotor system through the regulation of CXCL12 levels. Functionally, (Microbial infection) Acts as a coreceptor with CXCR4 for a restricted number of HIV isolates. This chain is Atypical chemokine receptor 3, found in Homo sapiens (Human).